The sequence spans 279 residues: Acetylglutamate kinase (279 aa).

Substrate contacts are provided by residues 64–65 (GG), Arg86, and Asn177.

This sequence belongs to the acetylglutamate kinase family. ArgB subfamily.

It localises to the cytoplasm. It carries out the reaction N-acetyl-L-glutamate + ATP = N-acetyl-L-glutamyl 5-phosphate + ADP. Its pathway is amino-acid biosynthesis; L-arginine biosynthesis; N(2)-acetyl-L-ornithine from L-glutamate: step 2/4. Catalyzes the ATP-dependent phosphorylation of N-acetyl-L-glutamate. The chain is Acetylglutamate kinase from Campylobacter jejuni subsp. jejuni serotype O:6 (strain 81116 / NCTC 11828).